The following is a 210-amino-acid chain: Glycerol-3-phosphate acyltransferase (210 aa).

A run of 5 helical transmembrane segments spans residues Ala10–Ile30, Pro59–Ala79, Ala87–Phe107, Phe116–Leu136, and Leu161–Ile181.

The protein belongs to the PlsY family. Probably interacts with PlsX.

Its subcellular location is the cell inner membrane. It carries out the reaction an acyl phosphate + sn-glycerol 3-phosphate = a 1-acyl-sn-glycero-3-phosphate + phosphate. It functions in the pathway lipid metabolism; phospholipid metabolism. Catalyzes the transfer of an acyl group from acyl-phosphate (acyl-PO(4)) to glycerol-3-phosphate (G3P) to form lysophosphatidic acid (LPA). This enzyme utilizes acyl-phosphate as fatty acyl donor, but not acyl-CoA or acyl-ACP. This chain is Glycerol-3-phosphate acyltransferase, found in Cereibacter sphaeroides (strain ATCC 17025 / ATH 2.4.3) (Rhodobacter sphaeroides).